Here is a 213-residue protein sequence, read N- to C-terminus: Putative 3-methyladenine DNA glycosylase (213 aa).

It belongs to the DNA glycosylase MPG family.

This chain is Putative 3-methyladenine DNA glycosylase, found in Paraburkholderia phytofirmans (strain DSM 17436 / LMG 22146 / PsJN) (Burkholderia phytofirmans).